Consider the following 429-residue polypeptide: Adenylosuccinate synthetase (429 aa).

Residues 12 to 18 (GDEGKGK) and 40 to 42 (GHT) contribute to the GTP site. The Proton acceptor role is filled by Asp-13. Mg(2+) contacts are provided by Asp-13 and Gly-40. Residues 13–16 (DEGK), 38–41 (NAGH), Thr-129, Arg-143, Gln-223, Thr-238, and Arg-302 contribute to the IMP site. The active-site Proton donor is the His-41. Residue 298–304 (TVTGRPR) participates in substrate binding. GTP is bound by residues Arg-304, 330-332 (KLD), and 412-414 (STS).

This sequence belongs to the adenylosuccinate synthetase family. In terms of assembly, homodimer. The cofactor is Mg(2+).

It localises to the cytoplasm. It catalyses the reaction IMP + L-aspartate + GTP = N(6)-(1,2-dicarboxyethyl)-AMP + GDP + phosphate + 2 H(+). The protein operates within purine metabolism; AMP biosynthesis via de novo pathway; AMP from IMP: step 1/2. Functionally, plays an important role in the de novo pathway of purine nucleotide biosynthesis. Catalyzes the first committed step in the biosynthesis of AMP from IMP. The sequence is that of Adenylosuccinate synthetase from Paramagnetospirillum magneticum (strain ATCC 700264 / AMB-1) (Magnetospirillum magneticum).